Consider the following 485-residue polypeptide: Zinc finger SWIM domain-containing protein 1 (485 aa).

The SWIM-type zinc finger occupies 363 to 405 (MNIQILEDTHKVQPQPPASCSCYFNQAFHLPCRHILAMLSARR).

This is Zinc finger SWIM domain-containing protein 1 (ZSWIM1) from Homo sapiens (Human).